We begin with the raw amino-acid sequence, 376 residues long: Transcription factor Sp6 (376 aa).

The interval 1-70 (MLTAVCGSLG…VDFSQGYELP (70 aa)) is disordered. The 9aaTAD signature appears at 118 to 126 (GSWWDLHPG). The interval 167-223 (HPHAHHLLPAAGGQHLLGPPDGAKALEVAAPESQGLDSSLDGAARPKGSRRSVPRSS) is disordered. Residues 173 to 186 (LLPAAGGQHLLGPP) are compositionally biased toward low complexity. 3 consecutive C2H2-type zinc fingers follow at residues 254–278 (HNCH…LRWH), 284–308 (FVCN…LQTH), and 314–336 (FPCA…MKTH). Residues 333 to 343 (MKTHEGAKEEA) show a composition bias toward basic and acidic residues. Residues 333–376 (MKTHEGAKEEAAGAASGEGKAGGAVEPPGGKGKREAEGSVAPSN) are disordered.

The protein belongs to the Sp1 C2H2-type zinc-finger protein family. As to expression, ubiquitous.

It is found in the nucleus. In terms of biological role, promotes cell proliferation. Plays a role in tooth germ growth. Plays a role in the control of enamel mineralization. Binds the AMBN promoter. The polypeptide is Transcription factor Sp6 (SP6) (Homo sapiens (Human)).